The following is a 407-amino-acid chain: uncharacterized protein (407 aa).

Lys-22 participates in a covalent cross-link: Glycyl lysine isopeptide (Lys-Gly) (interchain with G-Cter in ubiquitin).

The protein belongs to the SVF1 family.

It localises to the cytoplasm. This is an uncharacterized protein from Saccharomyces cerevisiae (strain ATCC 204508 / S288c) (Baker's yeast).